The primary structure comprises 845 residues: P protein (845 aa).

Residues 1–57 (MRLENREGRPTSGVLEMELPQASAPSRAGLGSLGLVGLDSSNHRPQQGGSKAGSRGP) are disordered. Residues 1 to 183 (MRLENREGRP…HLSKLRCCVQ (183 aa)) lie on the Extracellular side of the membrane. Low complexity predominate over residues 26–40 (SRAGLGSLGLVGLDS). Residues 184–204 (WLKVSGLFVFVVLCSILFSLY) form a helical membrane-spanning segment. Residues 205-337 (PDQGKFWQLL…QYLRASIEAQ (133 aa)) are Cytoplasmic-facing. The chain crosses the membrane as a helical span at residues 338–358 (VTIAAVILAGVYVLIIFEIVH). Residues 359–360 (RT) are Extracellular-facing. A helical membrane pass occupies residues 361 to 381 (LAAMLGSLAALAALAVIGDRP). At 382-393 (TLTQVVEWIDFE) the chain is on the cytoplasmic side. Residues 394 to 414 (TLALLFGMMILVAIFSETGFF) form a helical membrane-spanning segment. The Extracellular segment spans residues 415–429 (DYCAVKAYQLSRGRV). Residues 430 to 450 (WAMIIMLCLIAAVLSAFLDNV) form a helical membrane-spanning segment. Topologically, residues 451–513 (TTALLFTPVT…ELRKMGLDFA (63 aa)) are cytoplasmic. Residues 514-534 (GFTAHMFAGICFVLLFSFPLL) form a helical membrane-spanning segment. The Extracellular portion of the chain corresponds to 535 to 629 (RLLYWNRKLY…KKHRISDRTL (95 aa)). A helical transmembrane segment spans residues 630-650 (LTKCVTVLGLVIFMFFLNSFV). A topological domain (cytoplasmic) is located at residue Pro-651. Residues 652 to 672 (GVHLDLGWIAILGAIWLLILA) form a helical membrane-spanning segment. At 673-687 (DIHDFEIILHRVEWA) the chain is on the extracellular side. A helical transmembrane segment spans residues 688 to 708 (TLLFFAALFILMEALAHLHLI). The Cytoplasmic segment spans residues 709–730 (EYVGEQTALLIKMVPEDQRLAA). Residues 731–751 (AIIVVVWVSAIASSLIDNIPF) form a helical membrane-spanning segment. Topologically, residues 752–773 (TATMIPVLLNLSRDPEISLPAP) are extracellular. Residues 774–794 (PLMYALALGACLGGNGTLIGA) form a helical membrane-spanning segment. Residues 795-820 (SANVVCAGIAEQHGYGFSFMEFFRLG) lie on the Cytoplasmic side of the membrane. A helical membrane pass occupies residues 821 to 841 (FPMMVVSCMVGMCYLLVAHVV). At 842-845 (MGWN) the chain is on the extracellular side.

This sequence belongs to the CitM (TC 2.A.11) transporter family.

The protein resides in the melanosome membrane. It catalyses the reaction chloride(in) = chloride(out). Its function is as follows. Contributes to a melanosome-specific anion (chloride) current that modulates melanosomal pH for optimal tyrosinase activity required for melanogenesis and the melanosome maturation. One of the components of the mammalian pigmentary system. May serve as a key control point at which ethnic skin color variation is determined. Major determinant of brown and/or blue eye color. Seems to regulate the post-translational processing of tyrosinase, which catalyzes the limiting reaction in melanin synthesis. The chain is P protein (Oca2) from Sus scrofa (Pig).